The primary structure comprises 585 residues: MAGRWLDPLWAPGFLCVALILETASGAGDLSTKAHGHIQFSARGVNQTAMADCRAVCSLNTSDRCDFVKRNPDCHSEGGYLDYLKGIFCYFPPNLLPLAITLYVFWLLYLFLILGVTAAKFFCPNLSAISTSLKLSHNVAGVTFLAFGNGAPDIFSALVAFSDPRTAGLAIGALFGAGVLVTTVVAGGITILRPFMAASRPFLRDITFYMVAVFLTFTALYLGRITLVWALGYLGLYVFYVVTVIICTWVYQRQRSRSLVHSISETPELLTDSEEDQMSSNTNSYDYGEEYRPLLLGEETTGQILLQALNPLDYRKWRTQSISCKLLKVAKLPVEFLLLLTVPVVDPDKDDRNWKRPLNCLQLVISPLVLVLTLQSGVYGIYEIGGLLPVWAVVVIVGTALASVTFFATSNSEPPRLHWLFAFLGFLTSALWINAAATEVVNILRSLGVVFRLSNTVLGLTLLAWGNSIGDAFSDFTLARQGYPRMAFSACFGGIIFNILVGVGLGCLLQIVRSHASEVKLEPDGLLVWVLASALGLSLVFSLVSVPLQCFQLSKAYGLCLLLFYICFIVVVLLTEFGVIHLKAD.

Residues 1-26 (MAGRWLDPLWAPGFLCVALILETASG) form the signal peptide. Residues 27–95 (AGDLSTKAHG…GIFCYFPPNL (69 aa)) lie on the Extracellular side of the membrane. N-linked (GlcNAc...) asparagine glycosylation is present at Asn46. The chain crosses the membrane as a helical span at residues 96–116 (LPLAITLYVFWLLYLFLILGV). The Cytoplasmic segment spans residues 117–140 (TAAKFFCPNLSAISTSLKLSHNVA). The chain crosses the membrane as a helical span at residues 141–161 (GVTFLAFGNGAPDIFSALVAF). At 162-168 (SDPRTAG) the chain is on the extracellular side. The helical transmembrane segment at 169–189 (LAIGALFGAGVLVTTVVAGGI) threads the bilayer. Residues 190-205 (TILRPFMAASRPFLRD) are Cytoplasmic-facing. The chain crosses the membrane as a helical span at residues 206–226 (ITFYMVAVFLTFTALYLGRIT). A topological domain (extracellular) is located at residue Leu227. A helical transmembrane segment spans residues 228–247 (VWALGYLGLYVFYVVTVIIC). Residues 248–325 (TWVYQRQRSR…KWRTQSISCK (78 aa)) lie on the Cytoplasmic side of the membrane. Position 258 is a phosphoserine; by PKA (Ser258). A helical membrane pass occupies residues 326-346 (LLKVAKLPVEFLLLLTVPVVD). The Extracellular portion of the chain corresponds to 347 to 360 (PDKDDRNWKRPLNC). The chain crosses the membrane as a helical span at residues 361 to 381 (LQLVISPLVLVLTLQSGVYGI). Residues 382-383 (YE) are Cytoplasmic-facing. Residues 384-404 (IGGLLPVWAVVVIVGTALASV) form a helical membrane-spanning segment. The Extracellular segment spans residues 405 to 416 (TFFATSNSEPPR). The chain crosses the membrane as a helical span at residues 417 to 437 (LHWLFAFLGFLTSALWINAAA). Residues 438–445 (TEVVNILR) lie on the Cytoplasmic side of the membrane. The chain crosses the membrane as a helical span at residues 446-466 (SLGVVFRLSNTVLGLTLLAWG). Residues 467–491 (NSIGDAFSDFTLARQGYPRMAFSAC) are Extracellular-facing. The helical transmembrane segment at 492–512 (FGGIIFNILVGVGLGCLLQIV) threads the bilayer. Residues 513–525 (RSHASEVKLEPDG) lie on the Cytoplasmic side of the membrane. A helical transmembrane segment spans residues 526–546 (LLVWVLASALGLSLVFSLVSV). Over 547–559 (PLQCFQLSKAYGL) the chain is Extracellular. Residues 560–580 (CLLLFYICFIVVVLLTEFGVI) form a helical membrane-spanning segment. Over 581-585 (HLKAD) the chain is Cytoplasmic.

Belongs to the Ca(2+):cation antiporter (CaCA) (TC 2.A.19) family. SLC24A subfamily. Phosphorylation at Ser-258 by PKA prevents calcium overload. As to expression, widely expressed. Present at higher level in pancreas, stomach, skeletal muscle and skin (at protein level). Ubiquitously expressed.

The protein resides in the mitochondrion inner membrane. The catalysed reaction is Ca(2+)(in) + 3 Na(+)(out) = Ca(2+)(out) + 3 Na(+)(in). It carries out the reaction 3 Li(+)(out) + Ca(2+)(in) = 3 Li(+)(in) + Ca(2+)(out). Inhibited by the sodium/calcium exchanger inhibitor CGP-37157. Strongly inhibited by zinc. Mitochondrial sodium/calcium antiporter that mediates sodium-dependent calcium efflux from mitochondrion, by mediating the exchange of 3 sodium ions per 1 calcium ion. Plays a central role in mitochondrial calcium homeostasis by mediating mitochondrial calcium extrusion: calcium efflux is essential for mitochondrial function and cell survival, notably in cardiomyocytes. Regulates rates of glucose-dependent insulin secretion in pancreatic beta-cells during the first phase of insulin secretion: acts by mediating efflux of calcium from mitochondrion, thereby affecting cytoplasmic calcium responses. Required for store-operated Ca(2+) entry (SOCE) and Ca(2+) release-activated Ca(2+) (CRAC) channel regulation: sodium transport by SLC8B1 leads to promote calcium-shuttling that modulates mitochondrial redox status, thereby regulating SOCE activity. Involved in B-lymphocyte chemotaxis. Able to transport Ca(2+) in exchange of either Li(+) or Na(+), explaining how Li(+) catalyzes Ca(2+) exchange. In contrast to other members of the family its function is independent of K(+). The polypeptide is Mitochondrial sodium/calcium exchanger protein (Rattus norvegicus (Rat)).